Consider the following 243-residue polypeptide: ATP synthase subunit a (243 aa).

8 helical membrane passes run 29–49, 54–74, 89–109, 114–134, 141–161, 177–197, 200–220, and 221–241; these read NASLFMVLSTFLISLSCYVGL, VIPNPLQSIIEIIYDFIVSTI, VFTIFTFILVCNLLGILPLGF, HIAVTFAISMIVFISVTFIGF, FLHILLPQGTPMWLAPMMVLI, LAANMIAGHTIIKVIAGFVIN, IFLTPLPIAFIIILIGFEIFV, and AILQAYIFTVLTCVYLSDAVN.

The protein belongs to the ATPase A chain family. F-type ATPases have 2 components, CF(1) - the catalytic core - and CF(0) - the membrane proton channel. CF(1) has five subunits: alpha(3), beta(3), gamma(1), delta(1), epsilon(1). CF(0) has three main subunits: a(1), b(2) and c(9-12). The alpha and beta chains form an alternating ring which encloses part of the gamma chain. CF(1) is attached to CF(0) by a central stalk formed by the gamma and epsilon chains, while a peripheral stalk is formed by the delta and b chains.

It is found in the cell inner membrane. Functionally, key component of the proton channel; it plays a direct role in the translocation of protons across the membrane. This chain is ATP synthase subunit a, found in Ehrlichia ruminantium (strain Welgevonden).